The chain runs to 423 residues: Gamma-glutamyl phosphate reductase (423 aa).

This sequence belongs to the gamma-glutamyl phosphate reductase family.

Its subcellular location is the cytoplasm. It catalyses the reaction L-glutamate 5-semialdehyde + phosphate + NADP(+) = L-glutamyl 5-phosphate + NADPH + H(+). Its pathway is amino-acid biosynthesis; L-proline biosynthesis; L-glutamate 5-semialdehyde from L-glutamate: step 2/2. Its function is as follows. Catalyzes the NADPH-dependent reduction of L-glutamate 5-phosphate into L-glutamate 5-semialdehyde and phosphate. The product spontaneously undergoes cyclization to form 1-pyrroline-5-carboxylate. In Burkholderia pseudomallei (strain 1710b), this protein is Gamma-glutamyl phosphate reductase.